Consider the following 219-residue polypeptide: Phosphatidylserine decarboxylase proenzyme (219 aa).

Ser-188 functions as the Schiff-base intermediate with substrate; via pyruvic acid in the catalytic mechanism. Ser-188 is subject to Pyruvic acid (Ser); by autocatalysis.

Belongs to the phosphatidylserine decarboxylase family. PSD-A subfamily. In terms of assembly, heterodimer of a large membrane-associated beta subunit and a small pyruvoyl-containing alpha subunit. Requires pyruvate as cofactor. In terms of processing, is synthesized initially as an inactive proenzyme. Formation of the active enzyme involves a self-maturation process in which the active site pyruvoyl group is generated from an internal serine residue via an autocatalytic post-translational modification. Two non-identical subunits are generated from the proenzyme in this reaction, and the pyruvate is formed at the N-terminus of the alpha chain, which is derived from the carboxyl end of the proenzyme. The post-translation cleavage follows an unusual pathway, termed non-hydrolytic serinolysis, in which the side chain hydroxyl group of the serine supplies its oxygen atom to form the C-terminus of the beta chain, while the remainder of the serine residue undergoes an oxidative deamination to produce ammonia and the pyruvoyl prosthetic group on the alpha chain.

It localises to the cell membrane. The catalysed reaction is a 1,2-diacyl-sn-glycero-3-phospho-L-serine + H(+) = a 1,2-diacyl-sn-glycero-3-phosphoethanolamine + CO2. It participates in phospholipid metabolism; phosphatidylethanolamine biosynthesis; phosphatidylethanolamine from CDP-diacylglycerol: step 2/2. In terms of biological role, catalyzes the formation of phosphatidylethanolamine (PtdEtn) from phosphatidylserine (PtdSer). The sequence is that of Phosphatidylserine decarboxylase proenzyme from Trichlorobacter lovleyi (strain ATCC BAA-1151 / DSM 17278 / SZ) (Geobacter lovleyi).